The primary structure comprises 545 residues: Putative transcription factor ecdB (545 aa).

Residues 12 to 39 constitute a DNA-binding region (zn(2)-C6 fungal-type); it reads CDACRSRRVKCDGQRPSCMGCLSRGLDC. The tract at residues 79-99 is disordered; the sequence is PPPVLLASARPSSNPLSSHED.

Its subcellular location is the nucleus. This chain is Putative transcription factor ecdB, found in Aspergillus rugulosus (Emericella rugulosa).